The sequence spans 172 residues: DNA-directed RNA polymerase II subunit RPB7 (172 aa).

It belongs to the eukaryotic RPB7/RPC8 RNA polymerase subunit family. Component of the RNA polymerase II (Pol II) complex consisting of 12 subunits. RPB4 and RPB7 form a subcomplex that protrudes from the 10-subunit Pol II core complex.

The protein localises to the nucleus. Functionally, DNA-dependent RNA polymerase catalyzes the transcription of DNA into RNA using the four ribonucleoside triphosphates as substrates. Component of RNA polymerase II which synthesizes mRNA precursors and many functional non-coding RNAs. Pol II is the central component of the basal RNA polymerase II transcription machinery. It is composed of mobile elements that move relative to each other. RPB7 is part of a subcomplex with RPB4 that binds to a pocket formed by RPB1, RPB2 and RPB6 at the base of the clamp element. The RPB4-RPB7 subcomplex seems to lock the clamp via RPB7 in the closed conformation thus preventing double-stranded DNA to enter the active site cleft. The RPB4-RPB7 subcomplex binds single-stranded DNA and RNA. The protein is DNA-directed RNA polymerase II subunit RPB7 (polr2g) of Danio rerio (Zebrafish).